The chain runs to 342 residues: Phenylalanine--tRNA ligase alpha subunit (342 aa).

E255 provides a ligand contact to Mg(2+).

Belongs to the class-II aminoacyl-tRNA synthetase family. Phe-tRNA synthetase alpha subunit type 1 subfamily. As to quaternary structure, tetramer of two alpha and two beta subunits. It depends on Mg(2+) as a cofactor.

It is found in the cytoplasm. The catalysed reaction is tRNA(Phe) + L-phenylalanine + ATP = L-phenylalanyl-tRNA(Phe) + AMP + diphosphate + H(+). This is Phenylalanine--tRNA ligase alpha subunit from Pelotomaculum thermopropionicum (strain DSM 13744 / JCM 10971 / SI).